We begin with the raw amino-acid sequence, 164 residues long: MKMFVPAVVFAALASASAWANNGDTAQPLEKIAPYPQAEKGMKRQVITLTPQQDESTLKVELLIGQTLNVDCNQHRLGGTLETKTLEGWGYDYYVFDNVTSPVSTMMACPDGKKEQKFVTAWLGEDGMVRYNSKLPIVVYTPANVDVKYRIWKADANVQNAVAR.

The first 20 residues, 1–20, serve as a signal peptide directing secretion; sequence MKMFVPAVVFAALASASAWA. Residues C72 and C109 are joined by a disulfide bond.

It belongs to the protease inhibitor I11 (ecotin) family. As to quaternary structure, homodimer.

Its subcellular location is the periplasm. In terms of biological role, general inhibitor of pancreatic serine proteases: inhibits chymotrypsin, trypsin, elastases, factor X, kallikrein as well as a variety of other proteases. The polypeptide is Ecotin (Salmonella paratyphi A (strain ATCC 9150 / SARB42)).